The sequence spans 1088 residues: MGKYNLILSEYLSFIYNSQSAVQIPIYYSSNSELENRCIEFHAKCLENSKNGLSLKKLFSEYSDVIQNATLLSILSYSYDKYNAVERKLVKYARSKPLEADLTVNELDYENNKITSELFPTEEEYTDSLMDPAILTSLSSNLNAVMFWLEKHENDTAEKLKIYKRRLDLFIIVASTVNKYGVPRHNAKYRYEYDVMKDKPYYLVTWANSSIEMLMSVFSHEDYLIAKELIVLSYSNRSTLAKLVSSPMSILVALVDINGTFITNEELELEFSNKYVRAIVPDQTFDELKQMLDNMRKAGLVDIPKMIQDWLIDCSIEKFSLMAKIYSWSFHVGFRKQKMLDAALDQLKTEYTEDVDDEMYREYTMLIRDEVVKMLEESVKHDDHLLQDSELAGLLSMSSASNGESRQLKFGRKTIFSTKKNMHVMDDMANGRYTPGIIPPVNADKPIPLGRRDVPGRRTRIIFILPYEYFIAQHAVVEKMLIYAKHTREYAEFYSQSNQLLSYGDVTRFLSNNAMVLYTDVSQWDSSQHNTQPFRKGIIMGLDILANMTNDAKVVQTLNLYKQTQINLMDSYVQIPDGNVIKKIQYGAVASGEKQTKAANSIANLALIKTVLSRISNKYSFATKIIRVDGDDNYAVLQFNTEVTKQMVQDVSNDVRETYARMNAKVKALVSTVGIEIAKRYIAGGKIFFRAGINLLNNEKRGQSTQWDQAAVLYSNYIVNRLRGFETDREFILTKIMQMTSVAITGSLRLFPSERVLTTNSTFKVFDSEDFIIEYGTTDDEVYIQRAFMSLSSQKSGIADEISASSTFKNYVSKLSEQLLFSKNNIVSRGIALTEKAKLNSYAPISLEKRRAQISALLTMLQKPVTFKSNKITINDILKDIKPFFTLSEAHLPMQYQKFMPTLPENVQYIIQCIGSRTYQIEDDGSKSAISRLISKYSVYKPSIEELYKVISLHENEIQLYLISLGIPKIDADTYVGSKIYSQDKYRILESYVYNLLSINYGCYQLFDFNSPDLEKLIRIPFKGKIPAVTFILHLYAKLEVINYAIKNGSWISLFCNYPKSEMIKLWKKMWNITSLRSPYTNANFFQD.

The RdRp catalytic domain maps to 501–687; sequence LSYGDVTRFL…AKRYIAGGKI (187 aa).

This sequence belongs to the reoviridae RNA-directed RNA polymerase family. Interacts with VP3 (Potential). Interacts with VP2; this interaction activates VP1. Interacts with NSP5; this interaction is probably necessary for the formation of functional virus factories. Interacts with NSP2; this interaction is weak. Requires Mg(2+) as cofactor.

It localises to the virion. It catalyses the reaction RNA(n) + a ribonucleoside 5'-triphosphate = RNA(n+1) + diphosphate. Its function is as follows. RNA-directed RNA polymerase that is involved in both transcription and genome replication. Together with VP3 capping enzyme, forms an enzyme complex positioned near the channels situated at each of the five-fold vertices of the core. Following infection, the outermost layer of the virus is lost, leaving a double-layered particle (DLP) made up of the core and VP6 shell. VP1 then catalyzes the transcription of fully conservative plus-strand genomic RNAs that are extruded through the DLP's channels into the cytoplasm where they function as mRNAs for translation of viral proteins. One copy of each of the viral (+)RNAs is also recruited during core assembly, together with newly synthesized polymerase complexes and VP2. The polymerase of these novo-formed particles catalyzes the synthesis of complementary minus-strands leading to dsRNA formation. To do so, the polymerase specifically recognizes and binds 4 bases 5'-UGUG-3' in the conserved 3'-sequence of plus-strand RNA templates. VP2 presumably activates the autoinhibited VP1-RNA complex to coordinate packaging and genome replication. Once dsRNA synthesis is complete, the polymerase switches to the transcriptional mode, thus providing secondary transcription. In Homo sapiens (Human), this protein is RNA-directed RNA polymerase.